A 69-amino-acid polypeptide reads, in one-letter code: Light-harvesting protein B-1015 alpha chain (69 aa).

At 2–20 (ATEYRTASWKLWLILDPRR) the chain is on the cytoplasmic side. A helical transmembrane segment spans residues 21–41 (VLTALFVYLTVIALLIHFGLL). Histidine 37 contributes to the a bacteriochlorophyll binding site. Over 42–59 (STDRLNWWEFQRGLPKAA) the chain is Periplasmic. The propeptide occupies 60–69 (SLVVVPPAVG).

It belongs to the antenna complex alpha subunit family. As to quaternary structure, the core complex is formed by different alpha and beta chains, binding bacteriochlorophyll molecules, and arranged most probably in tetrameric structures disposed around the reaction center. The non-pigmented gamma chains may constitute additional components.

Its subcellular location is the cell inner membrane. In terms of biological role, antenna complexes are light-harvesting systems, which transfer the excitation energy to the reaction centers. In Blastochloris viridis (Rhodopseudomonas viridis), this protein is Light-harvesting protein B-1015 alpha chain (pufA).